The primary structure comprises 149 residues: MRFLTVAFLFLALSASALAEPVKFKDCGSWVGVIKEVNVSPCPTQPCKLHRGQSYSVNVTFTSNTQSQSSKAVVHGIVMGIPVPFPIPESDGCKSGIRCPIEKDKTYNYVNKLPVKNEYPSIKVVVEWELTDDKNQRFFCWQIPIEVEA.

The N-terminal stretch at Met-1 to Ala-19 is a signal peptide. Disulfide bonds link Cys-27/Cys-140, Cys-42/Cys-47, and Cys-93/Cys-99. Asn-58 carries N-linked (GlcNAc...) asparagine glycosylation. Lys-116 carries the post-translational modification N6-acetyllysine.

It belongs to the NPC2 family. As to quaternary structure, interacts with NPC1 (via the second lumenal domain) in a cholestrol-dependent manner. Interacts with NUS1/NgBR, the interaction stabilizes NCP2 and regulates cholesterol trafficking. Interacts with DHDDS. Interacts with NEDD4L (via C2 domain). Interacts with NPC1L1. In terms of tissue distribution, expressed in kidney, spleen, liver and mammary gland, but not in testis.

Its subcellular location is the secreted. The protein localises to the endoplasmic reticulum. It localises to the lysosome. The catalysed reaction is cholesterol(in) = cholesterol(out). In terms of biological role, intracellular cholesterol transporter which acts in concert with NPC1 and plays an important role in the egress of cholesterol from the lysosomal compartment. Unesterified cholesterol that has been released from LDLs in the lumen of the late endosomes/lysosomes is transferred by NPC2 to the cholesterol-binding pocket in the N-terminal domain of NPC1. May bind and mobilize cholesterol that is associated with membranes. NPC2 binds cholesterol with a 1:1 stoichiometry. Can bind a variety of sterols, including lathosterol, desmosterol and the plant sterols stigmasterol and beta-sitosterol. The secreted form of NCP2 regulates biliary cholesterol secretion via stimulation of ABCG5/ABCG8-mediated cholesterol transport. The chain is NPC intracellular cholesterol transporter 2 from Bos taurus (Bovine).